A 600-amino-acid polypeptide reads, in one-letter code: Aspartate--tRNA(Asp/Asn) ligase (600 aa).

Residue Glu174 participates in L-aspartate binding. Residues 198–201 form an aspartate region; that stretch reads QLFK. Arg220 is a binding site for L-aspartate. Residues 220 to 222 and Gln229 contribute to the ATP site; that span reads RDE. His457 serves as a coordination point for L-aspartate. Residue Glu491 coordinates ATP. Residue Arg498 coordinates L-aspartate. 543–546 contributes to the ATP binding site; sequence GLDR.

It belongs to the class-II aminoacyl-tRNA synthetase family. Type 1 subfamily. As to quaternary structure, homodimer.

The protein resides in the cytoplasm. The catalysed reaction is tRNA(Asx) + L-aspartate + ATP = L-aspartyl-tRNA(Asx) + AMP + diphosphate. Its function is as follows. Aspartyl-tRNA synthetase with relaxed tRNA specificity since it is able to aspartylate not only its cognate tRNA(Asp) but also tRNA(Asn). Reaction proceeds in two steps: L-aspartate is first activated by ATP to form Asp-AMP and then transferred to the acceptor end of tRNA(Asp/Asn). The polypeptide is Aspartate--tRNA(Asp/Asn) ligase (Burkholderia mallei (strain NCTC 10247)).